A 1449-amino-acid polypeptide reads, in one-letter code: ABC transporter G family member 21 (1449 aa).

Positions 1-10 (MEEYELREIA) are enriched in basic and acidic residues. Residues 1–49 (MEEYELREIALQEGGSNLDINTPPNYDNPVGDGSSPPDSPDIQKSENQF) are disordered. The segment covering 14-25 (GGSNLDINTPPN) has biased composition (polar residues). Residues 130–383 (ISFFNLFKPS…FIDLGFDCEP (254 aa)) form the ABC transporter 1 domain. In terms of domain architecture, ABC transmembrane type-2 1 spans 488 to 731 (WGDKFSLISR…ILSVEGKDYL (244 aa)). 5 helical membrane-spanning segments follow: residues 519-539 (IPGL…NAFL), 577-597 (IPLT…MFGL), 602-622 (GKFF…TNLF), 634-654 (ISQN…GYTI), and 747-767 (FITY…MEYF). Residues 818 to 1062 (FTWQNINYTV…LTSYFERYGV (245 aa)) form the ABC transporter 2 domain. 854–861 (GSSGAGKT) contributes to the ATP binding site. One can recognise an ABC transmembrane type-2 2 domain in the interval 1152-1386 (FYTYGSFIQS…PISEPLTGYV (235 aa)). 6 consecutive transmembrane segments (helical) span residues 1155–1175 (YGSF…FWSL), 1188–1208 (FIFE…PQFI), 1228–1248 (FAIS…TIFF), 1266–1286 (FYFW…GQAV), 1296–1316 (AHTL…VMVI), and 1423–1443 (LALI…FVYI).

The protein belongs to the ABC transporter superfamily. ABCG family. PDR (TC 3.A.1.205) subfamily.

The protein localises to the membrane. The polypeptide is ABC transporter G family member 21 (abcG21) (Dictyostelium discoideum (Social amoeba)).